The chain runs to 204 residues: Ricin B-like lectin R40G3 (204 aa).

In terms of domain architecture, Ricin B-type lectin spans threonine 54–isoleucine 200.

As to expression, expressed in shoots and lamina.

In terms of biological role, lectin which binds carbohydrates in vitro. Interacts through its lectin domain with glycan structures containing specific motifs. The chain is Ricin B-like lectin R40G3 from Oryza sativa subsp. japonica (Rice).